The sequence spans 397 residues: Succinyl-diaminopimelate desuccinylase (397 aa).

His73 contacts Zn(2+). Asp75 is a catalytic residue. Asp106 lines the Zn(2+) pocket. The Proton acceptor role is filled by Glu140. Zn(2+) is bound by residues Glu141, Glu169, and His366.

Belongs to the peptidase M20A family. DapE subfamily. In terms of assembly, homodimer. Zn(2+) serves as cofactor. The cofactor is Co(2+).

The enzyme catalyses N-succinyl-(2S,6S)-2,6-diaminopimelate + H2O = (2S,6S)-2,6-diaminopimelate + succinate. The protein operates within amino-acid biosynthesis; L-lysine biosynthesis via DAP pathway; LL-2,6-diaminopimelate from (S)-tetrahydrodipicolinate (succinylase route): step 3/3. Its function is as follows. Catalyzes the hydrolysis of N-succinyl-L,L-diaminopimelic acid (SDAP), forming succinate and LL-2,6-diaminopimelate (DAP), an intermediate involved in the bacterial biosynthesis of lysine and meso-diaminopimelic acid, an essential component of bacterial cell walls. This chain is Succinyl-diaminopimelate desuccinylase, found in Sinorhizobium medicae (strain WSM419) (Ensifer medicae).